Consider the following 139-residue polypeptide: Putative nickel-responsive regulator (139 aa).

4 residues coordinate Ni(2+): His76, His87, His89, and Cys95.

Belongs to the transcriptional regulatory CopG/NikR family. Ni(2+) serves as cofactor.

Transcriptional regulator. The chain is Putative nickel-responsive regulator from Rhodopseudomonas palustris (strain HaA2).